The chain runs to 61 residues: uncharacterized protein (61 aa).

This is an uncharacterized protein from Acidianus convivator (ABV).